Consider the following 274-residue polypeptide: Aspartate/glutamate leucyltransferase (274 aa).

The protein belongs to the R-transferase family. Bpt subfamily.

Its subcellular location is the cytoplasm. It carries out the reaction N-terminal L-glutamyl-[protein] + L-leucyl-tRNA(Leu) = N-terminal L-leucyl-L-glutamyl-[protein] + tRNA(Leu) + H(+). The enzyme catalyses N-terminal L-aspartyl-[protein] + L-leucyl-tRNA(Leu) = N-terminal L-leucyl-L-aspartyl-[protein] + tRNA(Leu) + H(+). In terms of biological role, functions in the N-end rule pathway of protein degradation where it conjugates Leu from its aminoacyl-tRNA to the N-termini of proteins containing an N-terminal aspartate or glutamate. This Ruegeria sp. (strain TM1040) (Silicibacter sp.) protein is Aspartate/glutamate leucyltransferase.